The following is a 308-amino-acid chain: HPr kinase/phosphorylase (308 aa).

Residues His-138 and Lys-159 contribute to the active site. An ATP-binding site is contributed by 153 to 160; that stretch reads GESGLGKS. Ser-160 is a Mg(2+) binding site. Asp-177 acts as the Proton acceptor; for phosphorylation activity. Proton donor; for dephosphorylation activity in catalysis. The important for the catalytic mechanism of both phosphorylation and dephosphorylation stretch occupies residues 201 to 210; that stretch reads LEVRGLGLLD. Residue Glu-202 coordinates Mg(2+). Arg-243 is a catalytic residue. An important for the catalytic mechanism of dephosphorylation region spans residues 264–269; the sequence is QVAAGR.

It belongs to the HPrK/P family. As to quaternary structure, homohexamer. Mg(2+) serves as cofactor.

It carries out the reaction [HPr protein]-L-serine + ATP = [HPr protein]-O-phospho-L-serine + ADP + H(+). It catalyses the reaction [HPr protein]-O-phospho-L-serine + phosphate + H(+) = [HPr protein]-L-serine + diphosphate. Catalyzes the ATP- as well as the pyrophosphate-dependent phosphorylation of a specific serine residue in HPr, a phosphocarrier protein of the phosphoenolpyruvate-dependent sugar phosphotransferase system (PTS). HprK/P also catalyzes the pyrophosphate-producing, inorganic phosphate-dependent dephosphorylation (phosphorolysis) of seryl-phosphorylated HPr (P-Ser-HPr). This chain is HPr kinase/phosphorylase, found in Bordetella bronchiseptica (strain ATCC BAA-588 / NCTC 13252 / RB50) (Alcaligenes bronchisepticus).